The chain runs to 888 residues: MLPKNYDPNEIEPKWQKFWLDEKIYKYELDEKKPSYAIDTPPPFTSGTLHLGHVLSHTWIDIIARYKRMTGYNVLFPQGFDNHGLPTELKVEKEFGISKDQPEKFLQKCIEWTWQAIEAMRNQFIRIGYSADWDLEYHTMDDWYKAAVQKSLIEFYKKGMLYQAEHPVYWCPRCRTSLAKAEVGYVEEDGFLYYIKLPLADGSGHVPIATTRPELMPACVAVFVHPEDERYKHVVGKKVKLPIFEREVPVLADEDVDPSFGTGAVYNCTYGDEQDVVWQKRYNLPVIIAINEDGTMNENAGPYAGLKTEEARKKIAEDLEKMGLLYKKEKIRHRVLRHTERSSCMAPIELLPKKQWFIKVKDFTDEIVKVAEQINWYPPDMFLRLKDWAESMDWDWVISRQRVFGTPIPFWVCDNGEIILPNEEDLPVDPRFEKPPRKCSDGSEPKPVTDVLDCWVDSSITPLIITKWHEAIKGDEEGKKWFEHNFPTALRPQGTDIIRTWAFYTIFRTWVLTGEKPWHDILINGMVAGPDGRKMSKSYGNVVAPDEVIPKYGADALRLWTALAPPGEDHPFKWETVDYNYRFLQKVWNIYRFAERHLENFDPASAPEELEPLDRWILSRLHRLIKFATEEMEKYRFNLLTRELITFVWHEVADDYIEMIKYRLYGDDEESKLKAKAALYELLYNVMLLLAPFVPHITEELYQNLFRERIGAKSVHLLEWPKYSEARIDEEAEKLGELAREIVGAMRRYKNSHGLSLNAKLKHVAIYTTDSYEVLKTIEKDIAGTMNIEKLEIIKGEPELEERIIEIKPNFKTVGPRYGKLVPKITAYLKENAEEVAKALKESGKIEFEVDGQKVELTKDDIVLRKAVFSEGEEVETAVVGDAVILFF.

The 'HIGH' region signature appears at 43–53; it reads PFTSGTLHLGH. Residues 534–538 carry the 'KMSKS' region motif; it reads KMSKS. Lys537 contacts ATP.

It belongs to the class-I aminoacyl-tRNA synthetase family. ValS type 2 subfamily.

The protein localises to the cytoplasm. It carries out the reaction tRNA(Val) + L-valine + ATP = L-valyl-tRNA(Val) + AMP + diphosphate. In terms of biological role, catalyzes the attachment of valine to tRNA(Val). As ValRS can inadvertently accommodate and process structurally similar amino acids such as threonine, to avoid such errors, it has a 'posttransfer' editing activity that hydrolyzes mischarged Thr-tRNA(Val) in a tRNA-dependent manner. This Thermococcus kodakarensis (strain ATCC BAA-918 / JCM 12380 / KOD1) (Pyrococcus kodakaraensis (strain KOD1)) protein is Valine--tRNA ligase.